Reading from the N-terminus, the 231-residue chain is Chromosome partition protein MukE (231 aa).

Positions 211–231 (SLLADEEEQDYNEQAELEGEA) are disordered. Positions 214 to 231 (ADEEEQDYNEQAELEGEA) are enriched in acidic residues.

Belongs to the MukE family. In terms of assembly, interacts, and probably forms a ternary complex, with MukF and MukB. The complex formation is stimulated by calcium or magnesium.

The protein resides in the cytoplasm. It localises to the nucleoid. Its function is as follows. Involved in chromosome condensation, segregation and cell cycle progression. May participate in facilitating chromosome segregation by condensation DNA from both sides of a centrally located replisome during cell division. Probably acts via its interaction with MukB and MukF. The polypeptide is Chromosome partition protein MukE (Vibrio vulnificus (strain CMCP6)).